The following is a 119-amino-acid chain: Ribonuclease P protein component (119 aa).

Belongs to the RnpA family. As to quaternary structure, consists of a catalytic RNA component (M1 or rnpB) and a protein subunit.

It carries out the reaction Endonucleolytic cleavage of RNA, removing 5'-extranucleotides from tRNA precursor.. Its function is as follows. RNaseP catalyzes the removal of the 5'-leader sequence from pre-tRNA to produce the mature 5'-terminus. It can also cleave other RNA substrates such as 4.5S RNA. The protein component plays an auxiliary but essential role in vivo by binding to the 5'-leader sequence and broadening the substrate specificity of the ribozyme. The chain is Ribonuclease P protein component from Sodalis glossinidius (strain morsitans).